Consider the following 354-residue polypeptide: Fructose-bisphosphate aldolase (354 aa).

Residue S61 coordinates D-glyceraldehyde 3-phosphate. Catalysis depends on D104, which acts as the Proton donor. Residues H105, D139, E169, and H221 each coordinate Zn(2+). Residue G222 coordinates dihydroxyacetone phosphate. H260 contacts Zn(2+). Residues 261–263 (GGS) and 282–285 (NIDT) each bind dihydroxyacetone phosphate.

It belongs to the class II fructose-bisphosphate aldolase family. In terms of assembly, homodimer. The cofactor is Zn(2+).

The catalysed reaction is beta-D-fructose 1,6-bisphosphate = D-glyceraldehyde 3-phosphate + dihydroxyacetone phosphate. Its pathway is carbohydrate degradation; glycolysis; D-glyceraldehyde 3-phosphate and glycerone phosphate from D-glucose: step 4/4. Catalyzes the aldol condensation of dihydroxyacetone phosphate (DHAP or glycerone-phosphate) with glyceraldehyde 3-phosphate (G3P) to form fructose 1,6-bisphosphate (FBP) in gluconeogenesis and the reverse reaction in glycolysis. In Campylobacter jejuni subsp. jejuni serotype O:2 (strain ATCC 700819 / NCTC 11168), this protein is Fructose-bisphosphate aldolase (fba).